The sequence spans 64 residues: Large ribosomal subunit protein bL35 (64 aa).

This sequence belongs to the bacterial ribosomal protein bL35 family.

This chain is Large ribosomal subunit protein bL35, found in Vibrio atlanticus (strain LGP32) (Vibrio splendidus (strain Mel32)).